The sequence spans 314 residues: tRNA pseudouridine synthase B (314 aa).

The active-site Nucleophile is the aspartate 54.

Belongs to the pseudouridine synthase TruB family. Type 1 subfamily.

It catalyses the reaction uridine(55) in tRNA = pseudouridine(55) in tRNA. Responsible for synthesis of pseudouridine from uracil-55 in the psi GC loop of transfer RNAs. The chain is tRNA pseudouridine synthase B from Ralstonia nicotianae (strain ATCC BAA-1114 / GMI1000) (Ralstonia solanacearum).